The chain runs to 417 residues: Serine hydroxymethyltransferase (417 aa).

(6S)-5,6,7,8-tetrahydrofolate-binding positions include L121 and 125-127 (GHL). K230 carries the post-translational modification N6-(pyridoxal phosphate)lysine. Residue 355–357 (SPF) participates in (6S)-5,6,7,8-tetrahydrofolate binding.

It belongs to the SHMT family. As to quaternary structure, homodimer. The cofactor is pyridoxal 5'-phosphate.

The protein localises to the cytoplasm. The catalysed reaction is (6R)-5,10-methylene-5,6,7,8-tetrahydrofolate + glycine + H2O = (6S)-5,6,7,8-tetrahydrofolate + L-serine. The protein operates within one-carbon metabolism; tetrahydrofolate interconversion. Its pathway is amino-acid biosynthesis; glycine biosynthesis; glycine from L-serine: step 1/1. Functionally, catalyzes the reversible interconversion of serine and glycine with tetrahydrofolate (THF) serving as the one-carbon carrier. This reaction serves as the major source of one-carbon groups required for the biosynthesis of purines, thymidylate, methionine, and other important biomolecules. Also exhibits THF-independent aldolase activity toward beta-hydroxyamino acids, producing glycine and aldehydes, via a retro-aldol mechanism. The chain is Serine hydroxymethyltransferase from Marinobacter nauticus (strain ATCC 700491 / DSM 11845 / VT8) (Marinobacter aquaeolei).